We begin with the raw amino-acid sequence, 153 residues long: uncharacterized protein (153 aa).

Positions 17 to 78 (IYIHTPHPHP…HTTLSNLSLN (62 aa)) are disordered. Over residues 22–38 (PHPHPHPHPHTPTHTHP) the composition is skewed to basic residues.

This is an uncharacterized protein from Saccharomyces cerevisiae (strain ATCC 204508 / S288c) (Baker's yeast).